The chain runs to 223 residues: NAD(P)H-hydrate epimerase (223 aa).

Residues 9-211 form the YjeF N-terminal domain; it reads AIKLDEELMG…ELKDKLHLIL (203 aa). 60–64 lines the (6S)-NADPHX pocket; it reads NNGGD. The K(+) site is built by Asn61 and Asp120. (6S)-NADPHX is bound by residues 124-130 and Asp153; that span reads GFSFKGP. Ser156 is a binding site for K(+).

Belongs to the NnrE/AIBP family. K(+) serves as cofactor.

It catalyses the reaction (6R)-NADHX = (6S)-NADHX. The enzyme catalyses (6R)-NADPHX = (6S)-NADPHX. Catalyzes the epimerization of the S- and R-forms of NAD(P)HX, a damaged form of NAD(P)H that is a result of enzymatic or heat-dependent hydration. This is a prerequisite for the S-specific NAD(P)H-hydrate dehydratase to allow the repair of both epimers of NAD(P)HX. This chain is NAD(P)H-hydrate epimerase, found in Entamoeba histolytica (strain ATCC 30459 / HM-1:IMSS / ABRM).